Reading from the N-terminus, the 192-residue chain is Ribosome maturation factor RimM (192 aa).

Residues 97–172 (EDEYYLADLI…VVLADPPALV (76 aa)) form the PRC barrel domain. The disordered stretch occupies residues 168–192 (PPALVGEPEGPESPAEDDDGERHYD).

Belongs to the RimM family. In terms of assembly, binds ribosomal protein uS19.

Its subcellular location is the cytoplasm. Functionally, an accessory protein needed during the final step in the assembly of 30S ribosomal subunit, possibly for assembly of the head region. Essential for efficient processing of 16S rRNA. May be needed both before and after RbfA during the maturation of 16S rRNA. It has affinity for free ribosomal 30S subunits but not for 70S ribosomes. This is Ribosome maturation factor RimM from Caulobacter sp. (strain K31).